Here is a 705-residue protein sequence, read N- to C-terminus: Ion-translocating oxidoreductase complex subunit C (705 aa).

2 consecutive 4Fe-4S ferredoxin-type domains span residues 368-397 and 407-435; these read MGETPEEQGCIRCSACADACPADLLPQQLY and KATAHNIADCIECGACAWVCPSSIPLVQY. The [4Fe-4S] cluster site is built by cysteine 377, cysteine 380, cysteine 383, cysteine 387, cysteine 416, cysteine 419, cysteine 422, and cysteine 426. Positions 536–684 are disordered; sequence RARQAENIPA…EPVDPRKAAV (149 aa).

The protein belongs to the 4Fe4S bacterial-type ferredoxin family. RnfC subfamily. In terms of assembly, the complex is composed of six subunits: RnfA, RnfB, RnfC, RnfD, RnfE and RnfG. The cofactor is [4Fe-4S] cluster.

Its subcellular location is the cell inner membrane. Its function is as follows. Part of a membrane-bound complex that couples electron transfer with translocation of ions across the membrane. This Citrobacter koseri (strain ATCC BAA-895 / CDC 4225-83 / SGSC4696) protein is Ion-translocating oxidoreductase complex subunit C.